Reading from the N-terminus, the 140-residue chain is uncharacterized protein (140 aa).

This is an uncharacterized protein from Fowlpox virus (strain NVSL) (FPV).